The following is a 503-amino-acid chain: ATP synthase subunit alpha (503 aa).

Position 169-176 (Gly-169–Thr-176) interacts with ATP.

This sequence belongs to the ATPase alpha/beta chains family. In terms of assembly, F-type ATPases have 2 components, CF(1) - the catalytic core - and CF(0) - the membrane proton channel. CF(1) has five subunits: alpha(3), beta(3), gamma(1), delta(1), epsilon(1). CF(0) has three main subunits: a(1), b(2) and c(9-12). The alpha and beta chains form an alternating ring which encloses part of the gamma chain. CF(1) is attached to CF(0) by a central stalk formed by the gamma and epsilon chains, while a peripheral stalk is formed by the delta and b chains.

The protein resides in the cell membrane. It carries out the reaction ATP + H2O + 4 H(+)(in) = ADP + phosphate + 5 H(+)(out). Its function is as follows. Produces ATP from ADP in the presence of a proton gradient across the membrane. The alpha chain is a regulatory subunit. The chain is ATP synthase subunit alpha from Dehalococcoides mccartyi (strain ATCC BAA-2100 / JCM 16839 / KCTC 5957 / BAV1).